The primary structure comprises 597 residues: Glypican-3 (597 aa).

A signal peptide spans 1-24; it reads MAGTVRTACLLVAMLLGLGCLGQA. Position 25 is a pyrrolidone carboxylic acid (Gln25). 7 cysteine pairs are disulfide-bonded: Cys34–Cys71, Cys64–Cys261, Cys72–Cys264, Cys196–Cys348, Cys251–Cys284, Cys273–Cys421, and Cys277–Cys409. N-linked (GlcNAc...) asparagine glycosylation is found at Asn123 and Asn240. A Phosphoserine modification is found at Ser351. Asn417 carries an N-linked (GlcNAc...) asparagine glycan. O-linked (Xyl...) (glycosaminoglycan) serine glycans are attached at residues Ser494 and Ser508. The disordered stretch occupies residues 533–553; the sequence is DAPGNKQHGNQKDNEITTSHS.

Belongs to the glypican family. As to quaternary structure, heterodimer; disulfide-linked. Cleavage by a furin-like convertase results in production of alpha and beta chains which form a disulfide-linked heterodimer. Interacts with DPP4. Interacts with FGF2. Interacts with WNT5A. Also interacts with WNT3A and WNT7B. Interacts with hedgehog protein SHH; the heparan sulfate chains are not required for the interaction. Also interacts with hedgehog protein IHH. Interacts with CD81. Interacts with Wnt receptors FZD4, FZD7 and FZD8; the heparan sulfate chains are required for the interaction. Post-translationally, O-glycosylated; contains heparan sulfate and/or chondroitin sulfate. Cleaved intracellularly by a furin-like convertase to generate 2 subunits, alpha and beta, which remain associated through disulfide bonds and are associated with the cell surface via the GPI-anchor. This processing is essential for its role in inhibition of hedgehog signaling. A second proteolytic event may result in cleavage of the protein on the cell surface, separating it from the GPI-anchor and leading to its shedding from the cell surface.

It is found in the cell membrane. Its function is as follows. Cell surface proteoglycan. Negatively regulates the hedgehog signaling pathway when attached via the GPI-anchor to the cell surface by competing with the hedgehog receptor PTC1 for binding to hedgehog proteins. Binding to the hedgehog protein SHH triggers internalization of the complex by endocytosis and its subsequent lysosomal degradation. Positively regulates the canonical Wnt signaling pathway by binding to the Wnt receptor Frizzled and stimulating the binding of the Frizzled receptor to Wnt ligands. Positively regulates the non-canonical Wnt signaling pathway. Binds to CD81 which decreases the availability of free CD81 for binding to the transcriptional repressor HHEX, resulting in nuclear translocation of HHEX and transcriptional repression. Inhibits the dipeptidyl peptidase activity of DPP4. Plays a role in limb patterning and skeletal development by controlling the cellular response to BMP4. Modulates the effects of growth factors BMP2, BMP7 and FGF7 on renal branching morphogenesis. Required for coronary vascular development. Plays a role in regulating cell movements during gastrulation. The chain is Glypican-3 (Gpc3) from Rattus norvegicus (Rat).